A 205-amino-acid chain; its full sequence is Dephospho-CoA kinase (205 aa).

Positions Val-15 to Ile-205 constitute a DPCK domain. Ala-23–Thr-28 is a binding site for ATP.

Belongs to the CoaE family.

It localises to the cytoplasm. It catalyses the reaction 3'-dephospho-CoA + ATP = ADP + CoA + H(+). It functions in the pathway cofactor biosynthesis; coenzyme A biosynthesis; CoA from (R)-pantothenate: step 5/5. Its function is as follows. Catalyzes the phosphorylation of the 3'-hydroxyl group of dephosphocoenzyme A to form coenzyme A. The chain is Dephospho-CoA kinase from Gloeobacter violaceus (strain ATCC 29082 / PCC 7421).